The following is a 119-amino-acid chain: Large ribosomal subunit protein uL18 (119 aa).

This sequence belongs to the universal ribosomal protein uL18 family. As to quaternary structure, part of the 50S ribosomal subunit; part of the 5S rRNA/L5/L18/L25 subcomplex. Contacts the 5S and 23S rRNAs.

This is one of the proteins that bind and probably mediate the attachment of the 5S RNA into the large ribosomal subunit, where it forms part of the central protuberance. The sequence is that of Large ribosomal subunit protein uL18 from Xylella fastidiosa (strain 9a5c).